Reading from the N-terminus, the 60-residue chain is Mastoparan-V (60 aa).

An N-terminal signal peptide occupies residues 1-27 (MKNTILILFTAFIALLGFFGMSAEALA). AXPX repeat units lie at residues 27–30 (ADPV), 31–34 (ADPL), 35–38 (AGPN), and 41–44 (ADPE). A propeptide spanning residues 28-45 (DPVADPLAGPNAEADPEA) is cleaved from the precursor. The residue at position 59 (L59) is a Leucine amide.

Belongs to the MCD family. Mastoparan subfamily. Expressed by the venom gland.

It is found in the secreted. The protein localises to the target cell membrane. In terms of biological role, antimicrobial and mast cell degranulating peptide. Has broad spectrum antibacterial activity against both Gram-positive and Gram-negative bacteria (S.aureus MIC=32-64 ug/ml, S.xylosus MIC=3 ug/ml, S.alactolyticus MIC=16 ug/ml, C.koseri MIC=4 ug/ml, E.coli MIC=8 ug/ml, K.pneumoniae MIC=64 ug/ml, P.aerugiosa MIC=256 ug/ml, S.choleraesuis MIC=32 ug/ml, S.typhimurium MIC=32 ug/ml, V.parahamelytics MIC=32 ug/ml). Affects membrane permeability of E.coli. Shows hemolytic activities on sheep, chicken and human erythrocytes. Its mast cell degranulation activity may be related to the activation of G-protein coupled receptors in mast cells as well as interaction with other proteins located in cell endosomal membranes in the mast cells. The sequence is that of Mastoparan-V from Vespa velutina flavitarsus (Asian hornet).